We begin with the raw amino-acid sequence, 520 residues long: Ribonuclease Y (520 aa).

Residues 4–24 traverse the membrane as a helical segment; it reads TVWILISILLATVGAVVGFFV. The KH domain occupies 210–273; the sequence is TVSVVNLPND…ETARIALDKL (64 aa). One can recognise an HD domain in the interval 336–429; that stretch reads VLKHSMEVAY…VAAADALSAA (94 aa).

This sequence belongs to the RNase Y family.

The protein localises to the cell membrane. Endoribonuclease that initiates mRNA decay. In Bacillus cereus (strain ZK / E33L), this protein is Ribonuclease Y.